The sequence spans 243 residues: MKITWFGHAAFRLDFADKAVLIDPFFTGNPSFNSTVEEAARGVTHILLTHGHSDHVGDTVSLVEDAADASRTLPVVANPEICAYLAAKGAGNAGQMMNTGGSLDCGGFTVTMVRADHSSGGPGSPSEYLGNPTGLIIRAPGEPTVWHMGDTDIYSDMALMCEIHRPKVVFIPIGDRFTMGPAVAALAVKRFLPGVEVVVPCHYGSFPILVQDASFFAQALADHPVKVVVPGPGGSFDANITPA.

Belongs to the UPF0173 family.

This chain is UPF0173 metal-dependent hydrolase Xaut_3786, found in Xanthobacter autotrophicus (strain ATCC BAA-1158 / Py2).